The primary structure comprises 160 residues: Transmembrane protein 216 (160 aa).

4 helical membrane passes run 41-61 (WYFA…GVIL), 68-88 (LILD…RLFY), 101-121 (LFVS…YLLL), and 134-154 (AVLL…ISIF).

Part of the tectonic-like complex (also named B9 complex).

The protein resides in the membrane. Its subcellular location is the cytoplasm. It localises to the cytoskeleton. The protein localises to the cilium basal body. Part of the tectonic-like complex which is required for tissue-specific ciliogenesis and may regulate ciliary membrane composition. This Danio rerio (Zebrafish) protein is Transmembrane protein 216 (tmem216).